The chain runs to 210 residues: tRNA (guanine-N(7)-)-methyltransferase (210 aa).

Glutamate 36, glutamate 61, aspartate 90, and aspartate 112 together coordinate S-adenosyl-L-methionine. The active site involves aspartate 112. Substrate-binding positions include lysine 116, aspartate 148, and 188–191 (TEYE).

Belongs to the class I-like SAM-binding methyltransferase superfamily. TrmB family.

The catalysed reaction is guanosine(46) in tRNA + S-adenosyl-L-methionine = N(7)-methylguanosine(46) in tRNA + S-adenosyl-L-homocysteine. It participates in tRNA modification; N(7)-methylguanine-tRNA biosynthesis. Its function is as follows. Catalyzes the formation of N(7)-methylguanine at position 46 (m7G46) in tRNA. The sequence is that of tRNA (guanine-N(7)-)-methyltransferase from Mycoplasma pneumoniae (strain ATCC 29342 / M129 / Subtype 1) (Mycoplasmoides pneumoniae).